Consider the following 419-residue polypeptide: Histidine--tRNA ligase (419 aa).

This sequence belongs to the class-II aminoacyl-tRNA synthetase family.

It localises to the cytoplasm. It carries out the reaction tRNA(His) + L-histidine + ATP = L-histidyl-tRNA(His) + AMP + diphosphate + H(+). The polypeptide is Histidine--tRNA ligase (Pyrobaculum arsenaticum (strain DSM 13514 / JCM 11321 / PZ6)).